Here is a 308-residue protein sequence, read N- to C-terminus: E3 ubiquitin-protein ligase RING2 (308 aa).

An N-acetylserine modification is found at Ser2. The interaction with HIP2 stretch occupies residues 2–179 (SQAVQTNGTQ…AEDNGDSSHC (178 aa)). Position 41 is a phosphoserine (Ser41). The RING-type zinc finger occupies 51–91 (CPICLDMLKNTMTTKECLHRFCADCIITALRSGNKECPTCR). Residues 93–98 (KLVSKR) are interaction with nucleosomes via an acidic patch on histone H2A and histone H2B. A Glycyl lysine isopeptide (Lys-Gly) (interchain with G-Cter in ubiquitin) cross-link involves residue Lys112. A phosphoserine mark is found at Ser143 and Ser168. The segment at 157-206 (QRGKKQQIENGSGAEDNGDSSHCSNASTHSNQEAGPSNKRTKTSDDSGLE) is disordered. A compositionally biased stretch (polar residues) spans 176–191 (SSHCSNASTHSNQEAG). Lys249 is covalently cross-linked (Glycyl lysine isopeptide (Lys-Gly) (interchain with G-Cter in SUMO2)).

As to quaternary structure, component of chromatin-associated Polycomb (PcG) complexes. Component of a number of PRC1-like complexes; these complexes contain either the polycomb group ring finger protein PCGF1, or PCGF2, or PCGF3, or BMI1, or PCGF5, or PCGF6. Distinct PRC1-like complexes are composed of a RING1 subunit (RING1B or RING1A), one of the six PCGF proteins (PCGF1, PCGF2, PCGF3, BMI1, PCGF5 or PCGF6), one PHC protein (PHC1, PHC2 or PHC3) and one of the CBX proteins (CBX2, CBX4, CBX6, CBX7 or CBX8). Part of a complex that contains RNF2, UB2D3 and BMI1; within that complex RNF2 and BMI1 form a tight heterodimer, where UB2D3 interacts only with RNF2. The complex composed of RNF2, UB2D3 and BMI1 binds nucleosomes, and has activity only with nucleosomal histone H2A. Part of a complex that contains PCGF5, RNF2 and UBE2D3. Part of a complex that contains AUTS2, PCGF5, RNF2, CSNK2B and RYBP. Interacts with CBX6 and CBX8. Interacts with PHC1, PCGF2, RYBP, CBX7, CBX4, CBX2, RNF1/RING1, BMI1 and PHC2. Interaction with RYBP and CBX7 is mutually exclusive; both compete for the same binding site on RNF2. Component of repressive BCOR complex containing a Polycomb group subcomplex at least composed of RYBP, PCGF1, BCOR and RING1. Interacts with CBX2 and PHC1. Interacts with CHTOP. Interacts with AURKB. Part of the E2F6.com-1 complex in G0 phase composed of E2F6, MGA, MAX, TFDP1, CBX3, BAT8, EUHMTASE1, RNF1/RING1, RNF2/RING2, MBLR, L3MBTL2 and YAF2. Component of some MLL1/MLL complex, at least composed of the core components KMT2A/MLL1, ASH2L, HCFC1/HCF1, WDR5 and RBBP5, as well as the facultative components BACC1, CHD8, E2F6, HSP70, INO80C, KANSL1, LAS1L, MAX, MCRS1, MGA, MYST1/MOF, PELP1, PHF20, PRP31, RING2, RUVB1/TIP49A, RUVB2/TIP49B, SENP3, TAF1, TAF4, TAF6, TAF7, TAF9 and TEX10. Interacts with RYBP, HIP2 and TFCP2. Interacts with NUPR1. Interacts with SAMD7 in a PHC2-dependent manner. Monoubiquitinated, by auto-ubiquitination. Polyubiquitinated in the presence of UBE2D3 (in vitro).

It is found in the nucleus. The protein resides in the cytoplasm. Its subcellular location is the chromosome. It carries out the reaction S-ubiquitinyl-[E2 ubiquitin-conjugating enzyme]-L-cysteine + [acceptor protein]-L-lysine = [E2 ubiquitin-conjugating enzyme]-L-cysteine + N(6)-ubiquitinyl-[acceptor protein]-L-lysine.. The protein operates within protein modification; protein ubiquitination. In terms of biological role, E3 ubiquitin-protein ligase that mediates monoubiquitination of 'Lys-119' of histone H2A (H2AK119Ub), thereby playing a central role in histone code and gene regulation. H2AK119Ub gives a specific tag for epigenetic transcriptional repression and participates in X chromosome inactivation of female mammals. May be involved in the initiation of both imprinted and random X inactivation. Essential component of a Polycomb group (PcG) multiprotein PRC1-like complex, a complex class required to maintain the transcriptionally repressive state of many genes, including Hox genes, throughout development. PcG PRC1 complex acts via chromatin remodeling and modification of histones, rendering chromatin heritably changed in its expressibility. E3 ubiquitin-protein ligase activity is enhanced by BMI1/PCGF4. Acts as the main E3 ubiquitin ligase on histone H2A of the PRC1 complex, while RING1 may rather act as a modulator of RNF2/RING2 activity. Plays a role in the transcriptional repression of genes that are required for pluripotency in embryonic stem cells, thereby contributing to differentiation of the ectodermal and endodermal germ layers. Association with the chromosomal DNA is cell-cycle dependent. In resting B- and T-lymphocytes, interaction with AURKB leads to block its activity, thereby maintaining transcription in resting lymphocytes. Also acts as a negative regulator of autophagy by mediating ubiquitination of AMBRA1, leading to its subsequent degradation. The sequence is that of E3 ubiquitin-protein ligase RING2 (Rnf2) from Rattus norvegicus (Rat).